The sequence spans 437 residues: MKNIKFSLAWQILFAMVLGILLGSYLHYHSDSRDWLVVNLLSPAGDIFIHLIKMIVVPIVISTLVVGIAGVGDAKQLGRIGAKTIIYFEVITTVAIILGITLANVFQPGAGVDMSQLATVDISKYQSTTEAVQSSSHGIMGTILSLVPTNIVASMAKGEMLPIIFFSVLFGLGLSSLPATHREPLVTVFRSISETMFKVTHMVMRYAPVGVFALIAVTVANFGFSSLWPLAKLVLLVHFAILFFALVVLGIVARLCGLSVWILIRILKDELILAYSTASSESVLPRIIEKMEAYGAPVSITSFVVPTGYSFNLDGSTLYQSIAAIFIAQLYGIDLSIWQEIILVLTLMVTSKGIAGVPGVSFVVLLATLGSVGIPLEGLAFIAGVDRILDMARTALNVVGNALAVLVIAKWEHKFDRKKALAYEREVLGKFDKTADQ.

Over 1 to 5 the chain is Cytoplasmic; it reads MKNIK. The chain crosses the membrane as a helical span at residues 6-26; sequence FSLAWQILFAMVLGILLGSYL. The Periplasmic segment spans residues 27–50; it reads HYHSDSRDWLVVNLLSPAGDIFIH. The chain crosses the membrane as a helical span at residues 51–71; sequence LIKMIVVPIVISTLVVGIAGV. The Cytoplasmic segment spans residues 72 to 84; it reads GDAKQLGRIGAKT. The helical transmembrane segment at 85–105 threads the bilayer; that stretch reads IIYFEVITTVAIILGITLANV. The Periplasmic portion of the chain corresponds to 106 to 159; sequence FQPGAGVDMSQLATVDISKYQSTTEAVQSSSHGIMGTILSLVPTNIVASMAKGE. Residues 160–180 traverse the membrane as a helical segment; it reads MLPIIFFSVLFGLGLSSLPAT. The Cytoplasmic portion of the chain corresponds to 181-210; the sequence is HREPLVTVFRSISETMFKVTHMVMRYAPVG. A helical membrane pass occupies residues 211–231; that stretch reads VFALIAVTVANFGFSSLWPLA. Residue Lys-232 is a topological domain, periplasmic. A helical membrane pass occupies residues 233–253; sequence LVLLVHFAILFFALVVLGIVA. The Cytoplasmic portion of the chain corresponds to 254 to 292; sequence RLCGLSVWILIRILKDELILAYSTASSESVLPRIIEKME. Residues 293 to 313 form a helical membrane-spanning segment; it reads AYGAPVSITSFVVPTGYSFNL. Residues 314-324 lie on the Periplasmic side of the membrane; sequence DGSTLYQSIAA. Residues 325-345 form a helical membrane-spanning segment; it reads IFIAQLYGIDLSIWQEIILVL. Residues 346-361 are Cytoplasmic-facing; the sequence is TLMVTSKGIAGVPGVS. The chain crosses the membrane as a helical span at residues 362–382; sequence FVVLLATLGSVGIPLEGLAFI. Residues 383–387 are Periplasmic-facing; it reads AGVDR. The helical transmembrane segment at 388–408 threads the bilayer; sequence ILDMARTALNVVGNALAVLVI. Residues 409–437 lie on the Cytoplasmic side of the membrane; that stretch reads AKWEHKFDRKKALAYEREVLGKFDKTADQ.

This sequence belongs to the dicarboxylate/amino acid:cation symporter (DAACS) (TC 2.A.23) family. GltP subfamily.

Its subcellular location is the cell inner membrane. With respect to regulation, glutamate uptake is inhibited by L-cysteate and beta-hydroxyaspartate. Inhibited by the uncoupler carbonylcyanide m-chlorophenylhydrazone (CCCP). Catalyzes the proton-dependent, binding-protein-independent transport of glutamate and aspartate. The protein is Proton/glutamate-aspartate symporter of Escherichia coli (strain K12).